The sequence spans 129 residues: Large ribosomal subunit protein bL19 (129 aa).

In terms of biological role, this protein is located at the 30S-50S ribosomal subunit interface and may play a role in the structure and function of the aminoacyl-tRNA binding site. This chain is Large ribosomal subunit protein bL19, found in Rhodopseudomonas palustris (strain ATCC BAA-98 / CGA009).